Here is a 367-residue protein sequence, read N- to C-terminus: Phosphoribosylaminoimidazole-succinocarboxamide synthase (367 aa).

This sequence belongs to the SAICAR synthetase family.

The catalysed reaction is 5-amino-1-(5-phospho-D-ribosyl)imidazole-4-carboxylate + L-aspartate + ATP = (2S)-2-[5-amino-1-(5-phospho-beta-D-ribosyl)imidazole-4-carboxamido]succinate + ADP + phosphate + 2 H(+). The protein operates within purine metabolism; IMP biosynthesis via de novo pathway; 5-amino-1-(5-phospho-D-ribosyl)imidazole-4-carboxamide from 5-amino-1-(5-phospho-D-ribosyl)imidazole-4-carboxylate: step 1/2. The chain is Phosphoribosylaminoimidazole-succinocarboxamide synthase from Vibrio parahaemolyticus serotype O3:K6 (strain RIMD 2210633).